A 253-amino-acid chain; its full sequence is Phosphate import ATP-binding protein PstB (253 aa).

Residues 7–249 (ASAKNLNLWY…PQSSKTKRYI (243 aa)) enclose the ABC transporter domain. Residue 39 to 46 (GPSGCGKS) participates in ATP binding.

It belongs to the ABC transporter superfamily. Phosphate importer (TC 3.A.1.7) family. As to quaternary structure, the complex is composed of two ATP-binding proteins (PstB), two transmembrane proteins (PstC and PstA) and a solute-binding protein (PstS).

It is found in the cell inner membrane. The catalysed reaction is phosphate(out) + ATP + H2O = ADP + 2 phosphate(in) + H(+). Its function is as follows. Part of the ABC transporter complex PstSACB involved in phosphate import. Responsible for energy coupling to the transport system. The polypeptide is Phosphate import ATP-binding protein PstB (Ehrlichia ruminantium (strain Gardel)).